Here is a 66-residue protein sequence, read N- to C-terminus: Large ribosomal subunit protein bL33c (66 aa).

This sequence belongs to the bacterial ribosomal protein bL33 family.

The protein resides in the plastid. Its subcellular location is the chloroplast. This Cycas taitungensis (Prince sago) protein is Large ribosomal subunit protein bL33c.